Reading from the N-terminus, the 265-residue chain is Eukaryotic translation initiation factor 3 subunit J (265 aa).

Composition is skewed to acidic residues over residues 1-12 and 26-44; these read MAPERWDDEEDS and DEEE…DSEV. 2 disordered regions span residues 1–113 and 212–265; these read MAPE…DADL and TMSN…DDFM. Basic and acidic residues-rich tracts occupy residues 45-65 and 73-86; these read EREK…EAAA and RIQE…KKAE. Positions 61–95 form a coiled coil; it reads AEAAAKKKSKSQRIQEHKEERKKKAEEEDSDSEEE. A compositionally biased stretch (acidic residues) spans 87–97; that stretch reads EEDSDSEEEDD. A compositionally biased stretch (basic and acidic residues) spans 216-228; the sequence is EKMREERAADKGS. Residues 251–265 are compositionally biased toward acidic residues; it reads DYDNGDDGLGDDDFM.

This sequence belongs to the eIF-3 subunit J family. As to quaternary structure, component of the eukaryotic translation initiation factor 3 (eIF-3) complex.

Its subcellular location is the cytoplasm. Component of the eukaryotic translation initiation factor 3 (eIF-3) complex, which is involved in protein synthesis of a specialized repertoire of mRNAs and, together with other initiation factors, stimulates binding of mRNA and methionyl-tRNAi to the 40S ribosome. The eIF-3 complex specifically targets and initiates translation of a subset of mRNAs involved in cell proliferation. The chain is Eukaryotic translation initiation factor 3 subunit J (hcr1) from Aspergillus oryzae (strain ATCC 42149 / RIB 40) (Yellow koji mold).